We begin with the raw amino-acid sequence, 1069 residues long: Degenerin-like protein del-10 (1069 aa).

Over 1–95 (MVRMAERLAE…LNAASPVTRG (95 aa)) the chain is Cytoplasmic. The chain crosses the membrane as a helical span at residues 96–116 (LWCMIIIAFVILVLVQCYSQI). The Extracellular segment spans residues 117–830 (KLYISEPVAT…FWSLACDIGG (714 aa)). Asn216, Asn290, Asn374, Asn454, Asn539, Asn545, and Asn584 each carry an N-linked (GlcNAc...) asparagine glycan. Residues 831–851 (ALGLFLGASLLTIIEIVYLCI) traverse the membrane as a helical segment. Topologically, residues 852–1069 (QYGLCGKRAR…EEDDDKHSYV (218 aa)) are cytoplasmic. 2 disordered regions span residues 898–948 (KKSQ…TLTP) and 960–1069 (RNSQ…HSYV). The segment covering 915–928 (GDKFRSRASSEESK) has biased composition (basic and acidic residues). Over residues 938–948 (NDPSGNSTLTP) the composition is skewed to polar residues. Residues 967–978 (YHDDHHPEDHYY) are compositionally biased toward basic and acidic residues.

This sequence belongs to the amiloride-sensitive sodium channel (TC 1.A.6) family.

The protein resides in the membrane. The chain is Degenerin-like protein del-10 from Caenorhabditis elegans.